Consider the following 152-residue polypeptide: Deoxyuridine 5'-triphosphate nucleotidohydrolase (152 aa).

Substrate contacts are provided by residues arginine 71 to glycine 73, asparagine 84, leucine 88 to aspartate 90, and methionine 98.

Belongs to the dUTPase family. Requires Mg(2+) as cofactor.

The enzyme catalyses dUTP + H2O = dUMP + diphosphate + H(+). It functions in the pathway pyrimidine metabolism; dUMP biosynthesis; dUMP from dCTP (dUTP route): step 2/2. In terms of biological role, this enzyme is involved in nucleotide metabolism: it produces dUMP, the immediate precursor of thymidine nucleotides and it decreases the intracellular concentration of dUTP so that uracil cannot be incorporated into DNA. This is Deoxyuridine 5'-triphosphate nucleotidohydrolase from Klebsiella pneumoniae (strain 342).